The chain runs to 361 residues: Protein RecA (361 aa).

77–84 (GPESSGKT) contributes to the ATP binding site.

Belongs to the RecA family.

It localises to the cytoplasm. Functionally, can catalyze the hydrolysis of ATP in the presence of single-stranded DNA, the ATP-dependent uptake of single-stranded DNA by duplex DNA, and the ATP-dependent hybridization of homologous single-stranded DNAs. It interacts with LexA causing its activation and leading to its autocatalytic cleavage. This chain is Protein RecA, found in Brucella abortus (strain S19).